A 252-amino-acid polypeptide reads, in one-letter code: 14-3-3-like protein GF14 omicron (252 aa).

2 positions are modified to phosphoserine: Ser-65 and Ser-188.

Belongs to the 14-3-3 family.

Its subcellular location is the nucleus. It localises to the cytoplasm. Is associated with a DNA binding complex that binds to the G box, a well-characterized cis-acting DNA regulatory element found in plant genes. This chain is 14-3-3-like protein GF14 omicron (GRF11), found in Arabidopsis thaliana (Mouse-ear cress).